The chain runs to 65 residues: Conotoxin VnMLCL-031 (65 aa).

A signal peptide spans 1–19 (MLCLPXFIILLLLASPAAP). Residues 20–43 (NPLQTRXQSNLIRAGPEDANIKTX) constitute a propeptide that is removed on maturation. Ile-64 bears the Isoleucine amide mark.

The protein belongs to the conotoxin T superfamily. As to expression, expressed by the venom duct.

It localises to the secreted. The protein is Conotoxin VnMLCL-031 of Conus ventricosus (Mediterranean cone).